A 319-amino-acid chain; its full sequence is ATP-dependent 6-phosphofructokinase (319 aa).

G11 is a binding site for ATP. 21–25 (RAVTR) lines the ADP pocket. ATP is bound by residues 72–73 (RY) and 102–105 (GDGS). Residue D103 coordinates Mg(2+). 125–127 (TID) contributes to the substrate binding site. The active-site Proton acceptor is the D127. An ADP-binding site is contributed by R154. Substrate-binding positions include R162 and 169 to 171 (MGR). ADP-binding positions include 185–187 (GAD) and 213–215 (KDH). Substrate contacts are provided by residues E222, R243, and 249–252 (HMQR).

It belongs to the phosphofructokinase type A (PFKA) family. ATP-dependent PFK group I subfamily. Prokaryotic clade 'B1' sub-subfamily. In terms of assembly, homotetramer. The cofactor is Mg(2+).

Its subcellular location is the cytoplasm. It catalyses the reaction beta-D-fructose 6-phosphate + ATP = beta-D-fructose 1,6-bisphosphate + ADP + H(+). Its pathway is carbohydrate degradation; glycolysis; D-glyceraldehyde 3-phosphate and glycerone phosphate from D-glucose: step 3/4. Its activity is regulated as follows. Allosterically activated by ADP and other diphosphonucleosides, and allosterically inhibited by phosphoenolpyruvate. The binding affinities for these effectors are decreased however, and therefore the allosteric effect becomes apparent only at high effector concentrations. Catalyzes the phosphorylation of D-fructose 6-phosphate to fructose 1,6-bisphosphate by ATP, the first committing step of glycolysis. This Lactobacillus delbrueckii subsp. bulgaricus protein is ATP-dependent 6-phosphofructokinase.